Here is a 192-residue protein sequence, read N- to C-terminus: Elongation factor P (192 aa).

N6-(3,6-diaminohexanoyl)-5-hydroxylysine is present on Lys-38.

It belongs to the elongation factor P family. Post-translationally, may be beta-lysylated on the epsilon-amino group of Lys-38 by the combined action of EpmA and EpmB, and then hydroxylated on the C5 position of the same residue by EpmC (if this protein is present). Lysylation is critical for the stimulatory effect of EF-P on peptide-bond formation. The lysylation moiety may extend toward the peptidyltransferase center and stabilize the terminal 3-CCA end of the tRNA. Hydroxylation of the C5 position on Lys-38 may allow additional potential stabilizing hydrogen-bond interactions with the P-tRNA.

The protein localises to the cytoplasm. Its pathway is protein biosynthesis; polypeptide chain elongation. Functionally, involved in peptide bond synthesis. Alleviates ribosome stalling that occurs when 3 or more consecutive Pro residues or the sequence PPG is present in a protein, possibly by augmenting the peptidyl transferase activity of the ribosome. Modification of Lys-38 is required for alleviation. The protein is Elongation factor P of Mannheimia succiniciproducens (strain KCTC 0769BP / MBEL55E).